Here is a 336-residue protein sequence, read N- to C-terminus: MFGQRLDTLGAMSSSVSSPSPETGKKILLAAPRGYCAGVDRAVETVERALEEYGAPIYVRKEIVHNRYVVDTLAEKGVIFVEEASEAPEGAHMVFSAHGVSPAVKEEAAAKNLQAIDAACPLVTKVHNEVKRFDKQGFHILFIGHEGHEEVEGTMGHSLDRTHLVDGIESIPGLPAFLADEPNLIWLSQTTLSVDETMEIVRELKKVYPQLQDPPSDDICYATQNRQVAVKAIAERCDLMIVVGSTNSSNSVRLVEVALQAGAKNAYLVDYAHQIDEAWLDGVQTIGISSGASVPEILVTGVLERLAGYGFDDVEEVTTAAEKIVFALPRVLRPAR.

Residues 1 to 23 (MFGQRLDTLGAMSSSVSSPSPET) form a disordered region. A [4Fe-4S] cluster-binding site is contributed by Cys-36. Positions 65 and 98 each coordinate (2E)-4-hydroxy-3-methylbut-2-enyl diphosphate. Positions 65 and 98 each coordinate dimethylallyl diphosphate. The isopentenyl diphosphate site is built by His-65 and His-98. Cys-120 is a binding site for [4Fe-4S] cluster. (2E)-4-hydroxy-3-methylbut-2-enyl diphosphate is bound at residue His-148. His-148 lines the dimethylallyl diphosphate pocket. His-148 is an isopentenyl diphosphate binding site. The Proton donor role is filled by Glu-150. Position 190 (Thr-190) interacts with (2E)-4-hydroxy-3-methylbut-2-enyl diphosphate. Cys-220 is a [4Fe-4S] cluster binding site. Ser-248, Ser-249, Asn-250, and Ser-293 together coordinate (2E)-4-hydroxy-3-methylbut-2-enyl diphosphate. Ser-248, Ser-249, Asn-250, and Ser-293 together coordinate dimethylallyl diphosphate. 4 residues coordinate isopentenyl diphosphate: Ser-248, Ser-249, Asn-250, and Ser-293.

Belongs to the IspH family. Requires [4Fe-4S] cluster as cofactor.

It catalyses the reaction isopentenyl diphosphate + 2 oxidized [2Fe-2S]-[ferredoxin] + H2O = (2E)-4-hydroxy-3-methylbut-2-enyl diphosphate + 2 reduced [2Fe-2S]-[ferredoxin] + 2 H(+). It carries out the reaction dimethylallyl diphosphate + 2 oxidized [2Fe-2S]-[ferredoxin] + H2O = (2E)-4-hydroxy-3-methylbut-2-enyl diphosphate + 2 reduced [2Fe-2S]-[ferredoxin] + 2 H(+). It functions in the pathway isoprenoid biosynthesis; dimethylallyl diphosphate biosynthesis; dimethylallyl diphosphate from (2E)-4-hydroxy-3-methylbutenyl diphosphate: step 1/1. Its pathway is isoprenoid biosynthesis; isopentenyl diphosphate biosynthesis via DXP pathway; isopentenyl diphosphate from 1-deoxy-D-xylulose 5-phosphate: step 6/6. In terms of biological role, catalyzes the conversion of 1-hydroxy-2-methyl-2-(E)-butenyl 4-diphosphate (HMBPP) into a mixture of isopentenyl diphosphate (IPP) and dimethylallyl diphosphate (DMAPP). Acts in the terminal step of the DOXP/MEP pathway for isoprenoid precursor biosynthesis. The sequence is that of 4-hydroxy-3-methylbut-2-enyl diphosphate reductase from Corynebacterium efficiens (strain DSM 44549 / YS-314 / AJ 12310 / JCM 11189 / NBRC 100395).